Here is a 98-residue protein sequence, read N- to C-terminus: NADH-ubiquinone oxidoreductase chain 4L (98 aa).

3 helical membrane-spanning segments follow: residues 1 to 21 (MSLT…GLLM), 31 to 51 (LCLE…VLTI), and 61 to 81 (IILL…LVVV).

It belongs to the complex I subunit 4L family. In terms of assembly, core subunit of respiratory chain NADH dehydrogenase (Complex I) which is composed of 45 different subunits.

It is found in the mitochondrion inner membrane. It carries out the reaction a ubiquinone + NADH + 5 H(+)(in) = a ubiquinol + NAD(+) + 4 H(+)(out). Functionally, core subunit of the mitochondrial membrane respiratory chain NADH dehydrogenase (Complex I) which catalyzes electron transfer from NADH through the respiratory chain, using ubiquinone as an electron acceptor. Part of the enzyme membrane arm which is embedded in the lipid bilayer and involved in proton translocation. The chain is NADH-ubiquinone oxidoreductase chain 4L (MT-ND4L) from Chalinolobus tuberculatus (New Zealand long-tailed bat).